Reading from the N-terminus, the 227-residue chain is uncharacterized protein (227 aa).

3 consecutive transmembrane segments (helical) span residues 109–128 (MCNVGLVLMMVFAAFYFAGI), 173–192 (AILLSVTLLALTPVIGILLT), and 199–221 (ALRVIFLVIAVEFVYAIFRVMMG).

The protein localises to the cell membrane. This is an uncharacterized protein from Archaeoglobus fulgidus (strain ATCC 49558 / DSM 4304 / JCM 9628 / NBRC 100126 / VC-16).